A 359-amino-acid polypeptide reads, in one-letter code: MAKSTSKTGRIAIIGASGYGGLQLVKLINEHPNFEISTLNGERSVGKNWNEINPFMKILQDKKITKSNIDEIALDSDYAILSLPNGLSSQLTPLLLKKGVKVLDLSADYRFKSLDKWKEVYTKEAAKYKRYDYELCEEAIYGFSEEFSSEISKSRLIACPGCYPTASLSLLIPFLKQGLIESEGIIVDAKSGTSGGGRNPNEQLLLSECSESISPYGVIGHRHTAEIERIASHFAGHEVNLQFTPHLVPMVRGILSTVYARLRDPGLTAEDCKIVIEAFYKDQPFIDILPVGIYPATKWVKNTNKVMISVEVDKRNGRIVLMSVIDNLLKGQAGQAVQNLNIMHGLESDIGLPKITFYP.

Residue Cys-162 is part of the active site.

This sequence belongs to the NAGSA dehydrogenase family. Type 1 subfamily.

The protein resides in the cytoplasm. The catalysed reaction is N-acetyl-L-glutamate 5-semialdehyde + phosphate + NADP(+) = N-acetyl-L-glutamyl 5-phosphate + NADPH + H(+). The protein operates within amino-acid biosynthesis; L-arginine biosynthesis; N(2)-acetyl-L-ornithine from L-glutamate: step 3/4. In terms of biological role, catalyzes the NADPH-dependent reduction of N-acetyl-5-glutamyl phosphate to yield N-acetyl-L-glutamate 5-semialdehyde. The sequence is that of N-acetyl-gamma-glutamyl-phosphate reductase from Prochlorococcus marinus (strain NATL1A).